Here is a 514-residue protein sequence, read N- to C-terminus: Protein spinster homolog 3 (514 aa).

Residues 1 to 22 (MSTECLKPQTGGPQSQSLSQGG) form a disordered region. Low complexity predominate over residues 9-21 (QTGGPQSQSLSQG). Transmembrane regions (helical) follow at residues 54–74 (VLCY…GVLL), 88–108 (GLLQ…FGYL), 116–136 (AILS…SFIS), 149–169 (FVGT…GDLF), 176–196 (CALA…YVLG), 212–232 (LMPC…PDVP), 264–284 (FVFS…LGFW), 313–333 (LIFG…GAEA), 347–367 (LICA…LILA), 376–396 (VFLA…ADIL), 415–435 (VAHV…SSVL), and 453–473 (SFLC…LTAL). The segment at 482-514 (ARQPGKGTLDSKDIASRNTESQGLLSGTSTPTE) is disordered. Positions 497-514 (SRNTESQGLLSGTSTPTE) are enriched in polar residues.

Belongs to the major facilitator superfamily. Spinster (TC 2.A.1.49) family.

Its subcellular location is the membrane. Its function is as follows. Sphingolipid transporter. The protein is Protein spinster homolog 3 (Spns3) of Mus musculus (Mouse).